The primary structure comprises 236 residues: RNA-binding protein 24 (236 aa).

The RRM domain occupies Thr11–Leu88. Residues Gln175–Gln199 are necessary for interaction with EIF4E.

Interacts with EIF4E; this interaction prevents EIF4E from binding to p53/TP53 mRNA and inhibits the assembly of translation initiation complex. In terms of assembly, (Microbial infection) Interacts with HCV mature core protein; this interaction, which enhances the interaction of Core with 5'-UTR may favor viral replication over translation. As to quaternary structure, (Microbial infection) Interacts with HCV Serine protease/helicase NS3. Expressed in fetal and adult heart and skeletal muscles.

The protein localises to the nucleus. It localises to the cytoplasm. In terms of biological role, multifunctional RNA-binding protein involved in the regulation of pre-mRNA splicing, mRNA stability and mRNA translation important for cell fate decision and differentiation. Plays a major role in pre-mRNA alternative splicing regulation. Mediates preferentially muscle-specific exon inclusion in numerous mRNAs important for striated cardiac and skeletal muscle cell differentiation. Binds to intronic splicing enhancer (ISE) composed of stretches of GU-rich motifs localized in flanking intron of exon that will be included by alternative splicing. Involved in embryonic stem cell (ESC) transition to cardiac cell differentiation by promoting pre-mRNA alternative splicing events of several pluripotency and/or differentiation genes. Plays a role in the regulation of mRNA stability. Binds to 3'-untranslated region (UTR) AU-rich elements in target transcripts, such as CDKN1A and MYOG, leading to maintain their stabilities. Involved in myogenic differentiation by regulating MYOG levels. Binds to multiple regions in the mRNA 3'-UTR of TP63 isoform 2, hence inducing its destabilization. Also promotes the destabilization of the CHRM2 mRNA via its binding to a region in the coding sequence. Plays a role in the regulation of mRNA translation. Mediates repression of p53/TP53 mRNA translation through its binding to U-rich element in the 3'-UTR, hence preventing EIF4E from binding to p53/TP53 mRNA and translation initiation. Binds to a huge amount of mRNAs. Required for embryonic heart development, sarcomer and M-band formation in striated muscles. Together with RBM20, promotes the expression of short isoforms of PDLIM5/ENH in cardiomyocytes. Its function is as follows. (Microbial infection) Promotes hepatitis C virus (HCV) replication over translation through the inhibition of viral protein expression. Decreases viral translation by linking viral 5'- and 3'-UTRs, blocking 80S ribosome assembly on the viral IRES and enhancing the interaction of the mature core protein and 5'-UTR. This chain is RNA-binding protein 24, found in Homo sapiens (Human).